A 91-amino-acid polypeptide reads, in one-letter code: UPF0250 protein NGK_1021 (91 aa).

This sequence belongs to the UPF0250 family.

The sequence is that of UPF0250 protein NGK_1021 from Neisseria gonorrhoeae (strain NCCP11945).